We begin with the raw amino-acid sequence, 210 residues long: Uracil phosphoribosyltransferase (210 aa).

Residues Arg-78, Arg-103, and 130–138 contribute to the 5-phospho-alpha-D-ribose 1-diphosphate site; that span reads DPMLATGGT. Residues Ile-193 and 198-200 each bind uracil; that span reads GDA. Residue Asp-199 participates in 5-phospho-alpha-D-ribose 1-diphosphate binding.

It belongs to the UPRTase family. Mg(2+) is required as a cofactor.

It carries out the reaction UMP + diphosphate = 5-phospho-alpha-D-ribose 1-diphosphate + uracil. The protein operates within pyrimidine metabolism; UMP biosynthesis via salvage pathway; UMP from uracil: step 1/1. Its activity is regulated as follows. Allosterically activated by GTP. In terms of biological role, catalyzes the conversion of uracil and 5-phospho-alpha-D-ribose 1-diphosphate (PRPP) to UMP and diphosphate. The chain is Uracil phosphoribosyltransferase from Stenotrophomonas maltophilia (strain K279a).